The sequence spans 541 residues: Membrane protein insertase YidC (541 aa).

The next 6 membrane-spanning stretches (helical) occupy residues 6 to 26 (NILL…WQAD), 325 to 345 (LVVD…LLMF), 349 to 369 (FVGN…GLLF), 420 to 440 (GGCL…WVLL), 457 to 477 (LSVQ…MFVM), and 500 to 520 (VIFT…WLVG).

The protein belongs to the OXA1/ALB3/YidC family. Type 1 subfamily. Interacts with the Sec translocase complex via SecD. Specifically interacts with transmembrane segments of nascent integral membrane proteins during membrane integration.

It localises to the cell inner membrane. Functionally, required for the insertion and/or proper folding and/or complex formation of integral membrane proteins into the membrane. Involved in integration of membrane proteins that insert both dependently and independently of the Sec translocase complex, as well as at least some lipoproteins. Aids folding of multispanning membrane proteins. The polypeptide is Membrane protein insertase YidC (Shewanella baltica (strain OS195)).